We begin with the raw amino-acid sequence, 406 residues long: Imidazolonepropionase (406 aa).

Residues His-72 and His-74 each coordinate Fe(3+). Residues His-72 and His-74 each contribute to the Zn(2+) site. The 4-imidazolone-5-propanoate site is built by Arg-81, Tyr-144, and His-177. An N-formimidoyl-L-glutamate-binding site is contributed by Tyr-144. Residue His-242 coordinates Fe(3+). Position 242 (His-242) interacts with Zn(2+). Gln-245 contributes to the 4-imidazolone-5-propanoate binding site. Asp-317 provides a ligand contact to Fe(3+). Zn(2+) is bound at residue Asp-317. N-formimidoyl-L-glutamate contacts are provided by Asn-319 and Gly-321. Thr-322 is a binding site for 4-imidazolone-5-propanoate.

The protein belongs to the metallo-dependent hydrolases superfamily. HutI family. Requires Zn(2+) as cofactor. The cofactor is Fe(3+).

The protein resides in the cytoplasm. The catalysed reaction is 4-imidazolone-5-propanoate + H2O = N-formimidoyl-L-glutamate. It functions in the pathway amino-acid degradation; L-histidine degradation into L-glutamate; N-formimidoyl-L-glutamate from L-histidine: step 3/3. Functionally, catalyzes the hydrolytic cleavage of the carbon-nitrogen bond in imidazolone-5-propanoate to yield N-formimidoyl-L-glutamate. It is the third step in the universal histidine degradation pathway. In Yersinia pestis bv. Antiqua (strain Antiqua), this protein is Imidazolonepropionase.